A 680-amino-acid polypeptide reads, in one-letter code: DNA-directed RNA polymerase subunit beta' (680 aa).

Residues Cys-69, Cys-71, Cys-87, and Cys-90 each contribute to the Zn(2+) site. Mg(2+) contacts are provided by Asp-489, Asp-491, and Asp-493.

Belongs to the RNA polymerase beta' chain family. RpoC1 subfamily. In terms of assembly, in plastids the minimal PEP RNA polymerase catalytic core is composed of four subunits: alpha, beta, beta', and beta''. When a (nuclear-encoded) sigma factor is associated with the core the holoenzyme is formed, which can initiate transcription. Mg(2+) serves as cofactor. Requires Zn(2+) as cofactor.

It localises to the plastid. It is found in the chloroplast. The catalysed reaction is RNA(n) + a ribonucleoside 5'-triphosphate = RNA(n+1) + diphosphate. Functionally, DNA-dependent RNA polymerase catalyzes the transcription of DNA into RNA using the four ribonucleoside triphosphates as substrates. This Arabidopsis thaliana (Mouse-ear cress) protein is DNA-directed RNA polymerase subunit beta'.